Here is a 294-residue protein sequence, read N- to C-terminus: Cyclin-G1 (294 aa).

It belongs to the cyclin family. Cyclin G subfamily. As to quaternary structure, binds to B' regulatory B subunits of protein phosphatase A (PP2A) following induction by p53 (in vitro). As to expression, highest levels in kidney, heart and skeletal muscle.

It is found in the nucleus. In terms of biological role, may play a role in growth regulation. Is associated with G2/M phase arrest in response to DNA damage. May be an intermediate by which p53 mediates its role as an inhibitor of cellular proliferation. This Mus musculus (Mouse) protein is Cyclin-G1 (Ccng1).